The primary structure comprises 332 residues: Beta-ketoacyl-[acyl-carrier-protein] synthase III (332 aa).

Residues Cys112 and His252 contribute to the active site. The segment at 253–257 is ACP-binding; that stretch reads QANLR. Residue Asn282 is part of the active site.

The protein belongs to the thiolase-like superfamily. FabH family. As to quaternary structure, homodimer.

It is found in the cytoplasm. The catalysed reaction is malonyl-[ACP] + acetyl-CoA + H(+) = 3-oxobutanoyl-[ACP] + CO2 + CoA. The protein operates within lipid metabolism; fatty acid biosynthesis. Catalyzes the condensation reaction of fatty acid synthesis by the addition to an acyl acceptor of two carbons from malonyl-ACP. Catalyzes the first condensation reaction which initiates fatty acid synthesis and may therefore play a role in governing the total rate of fatty acid production. Possesses both acetoacetyl-ACP synthase and acetyl transacylase activities. Its substrate specificity determines the biosynthesis of branched-chain and/or straight-chain of fatty acids. The polypeptide is Beta-ketoacyl-[acyl-carrier-protein] synthase III (Syntrophomonas wolfei subsp. wolfei (strain DSM 2245B / Goettingen)).